A 320-amino-acid polypeptide reads, in one-letter code: Variant surface glycoprotein ILTAT 1.2 (320 aa).

Residues Asn-146, Asn-282, and Asn-295 are each glycosylated (N-linked (GlcNAc...) asparagine). A disordered region spans residues 297 to 320; the sequence is TKATENGVPVAQTQTGGSETTTEK. Residues 308–320 are compositionally biased toward low complexity; it reads QTQTGGSETTTEK.

It is found in the cell membrane. Functionally, VSG forms a coat on the surface of the parasite. The trypanosome evades the immune response of the host by expressing a series of antigenically distinct VSGs from an estimated 1000 VSG genes. This Trypanosoma brucei brucei protein is Variant surface glycoprotein ILTAT 1.2.